A 182-amino-acid polypeptide reads, in one-letter code: Ribosome-recycling factor (182 aa).

The protein belongs to the RRF family.

It is found in the cytoplasm. In terms of biological role, responsible for the release of ribosomes from messenger RNA at the termination of protein biosynthesis. May increase the efficiency of translation by recycling ribosomes from one round of translation to another. The protein is Ribosome-recycling factor of Hydrogenobaculum sp. (strain Y04AAS1).